Reading from the N-terminus, the 424-residue chain is Cysteate synthase (424 aa).

An N6-(pyridoxal phosphate)lysine modification is found at Lys106. Pyridoxal 5'-phosphate contacts are provided by Asn132 and Thr381.

This sequence belongs to the threonine synthase family. Cysteate synthase subfamily. Homotrimer. Pyridoxal 5'-phosphate serves as cofactor.

It catalyses the reaction O-phospho-L-serine + sulfite + H(+) = L-cysteate + phosphate. The protein operates within cofactor biosynthesis; coenzyme M biosynthesis. Specifically catalyzes the beta-elimination of phosphate from L-phosphoserine and the beta-addition of sulfite to the dehydroalanine intermediate to produce L-cysteate. In Methanoregula boonei (strain DSM 21154 / JCM 14090 / 6A8), this protein is Cysteate synthase.